The following is a 202-amino-acid chain: 3-isopropylmalate dehydratase small subunit (202 aa).

It belongs to the LeuD family. LeuD type 1 subfamily. As to quaternary structure, heterodimer of LeuC and LeuD.

It carries out the reaction (2R,3S)-3-isopropylmalate = (2S)-2-isopropylmalate. It participates in amino-acid biosynthesis; L-leucine biosynthesis; L-leucine from 3-methyl-2-oxobutanoate: step 2/4. Its function is as follows. Catalyzes the isomerization between 2-isopropylmalate and 3-isopropylmalate, via the formation of 2-isopropylmaleate. This is 3-isopropylmalate dehydratase small subunit from Rhizobium etli (strain ATCC 51251 / DSM 11541 / JCM 21823 / NBRC 15573 / CFN 42).